A 449-amino-acid polypeptide reads, in one-letter code: Acetolactate synthase small subunit 1, chloroplastic (449 aa).

A chloroplast-targeting transit peptide spans 1-30 (MEHIQTRTTLSQLSTLPSDKRLGAIRFKCL). 2 consecutive ACT domains span residues 31–98 (LVMK…DLSK) and 259–333 (TLSM…DITH).

This sequence belongs to the acetolactate synthase small subunit family. As to quaternary structure, the acetolactate synthase complex contains both large catalytic subunits and small regulatory subunits.

The protein localises to the plastid. It localises to the chloroplast. Its pathway is amino-acid biosynthesis; L-isoleucine biosynthesis; L-isoleucine from 2-oxobutanoate: step 1/4. The protein operates within amino-acid biosynthesis; L-valine biosynthesis; L-valine from pyruvate: step 1/4. Regulatory subunit of acetohydroxy-acid synthase. Probably involved in feedback inhibition by branched-chain amino acids. Not involved in herbicide tolerance. This chain is Acetolactate synthase small subunit 1, chloroplastic, found in Nicotiana plumbaginifolia (Leadwort-leaved tobacco).